Here is a 157-residue protein sequence, read N- to C-terminus: Transcriptional repressor NrdR (157 aa).

The segment at 3–34 (CPFCNAEDTKVIDSRLVEEGTQVRRRRECLKC) is a zinc-finger region. Residues 49-139 (PRIIKRDGRR…VYRSFQDINA (91 aa)) enclose the ATP-cone domain.

It belongs to the NrdR family. Zn(2+) is required as a cofactor.

Functionally, negatively regulates transcription of bacterial ribonucleotide reductase nrd genes and operons by binding to NrdR-boxes. The polypeptide is Transcriptional repressor NrdR (Coxiella burnetii (strain CbuK_Q154) (Coxiella burnetii (strain Q154))).